A 205-amino-acid chain; its full sequence is Photosystem I assembly protein Ycf4 (205 aa).

The next 2 helical transmembrane spans lie at Trp23–Ile43 and Leu86–Phe106.

It belongs to the Ycf4 family.

Its subcellular location is the plastid. The protein localises to the chloroplast thylakoid membrane. Seems to be required for the assembly of the photosystem I complex. This chain is Photosystem I assembly protein Ycf4, found in Tetradesmus obliquus (Green alga).